The primary structure comprises 325 residues: Pectinesterase A (325 aa).

The signal sequence occupies residues 1–18 (MRVQSYLSLFSLVGAALC). Asn-126 carries an N-linked (GlcNAc...) asparagine glycan. Gln-143 contributes to the substrate binding site. Catalysis depends on Asp-166, which acts as the Proton donor. Asp-187 serves as the catalytic Nucleophile. Substrate-binding residues include Arg-247 and Trp-249.

This sequence belongs to the pectinesterase family.

It localises to the secreted. It catalyses the reaction [(1-&gt;4)-alpha-D-galacturonosyl methyl ester](n) + n H2O = [(1-&gt;4)-alpha-D-galacturonosyl](n) + n methanol + n H(+). Its pathway is glycan metabolism; pectin degradation; 2-dehydro-3-deoxy-D-gluconate from pectin: step 1/5. In terms of biological role, involved in maceration and soft-rotting of plant tissue. Active against citrus pectin. The protein is Pectinesterase A (pmeA) of Emericella nidulans (strain FGSC A4 / ATCC 38163 / CBS 112.46 / NRRL 194 / M139) (Aspergillus nidulans).